We begin with the raw amino-acid sequence, 328 residues long: MTDILDELDAGRAPLAPTLADLRGDWARAEPSAHLQRLESESIHILREVAAEFAKPVMLYSIGKDSSVLLHLAMKAFAPGKPPFPLLHVDTTWKFREMIEFRDQRMRELGLDLIVHINPDGVAQGIGPFSHGSALHTDVMKTQGLRQALEAHGFDAAIGGARRDEEKSRAKERIFSHRSAAHRWDPKNQRPELWSLYNTLLAPGESMRVFPLSNWTERDVWDYILVEQIPIVPLYFAALRPVVERDGALIMVDDARMPLRPGEVPQLRSVRFRTLGCYPLTGAMPSTATTLEQIVDEMLASRSSERQGRVIDRDSTGSMERKKAEGYF.

Positions 305-328 (ERQGRVIDRDSTGSMERKKAEGYF) are disordered.

Belongs to the PAPS reductase family. CysD subfamily. In terms of assembly, heterodimer composed of CysD, the smaller subunit, and CysN.

The enzyme catalyses sulfate + ATP + H(+) = adenosine 5'-phosphosulfate + diphosphate. It participates in sulfur metabolism; hydrogen sulfide biosynthesis; sulfite from sulfate: step 1/3. Functionally, with CysN forms the ATP sulfurylase (ATPS) that catalyzes the adenylation of sulfate producing adenosine 5'-phosphosulfate (APS) and diphosphate, the first enzymatic step in sulfur assimilation pathway. APS synthesis involves the formation of a high-energy phosphoric-sulfuric acid anhydride bond driven by GTP hydrolysis by CysN coupled to ATP hydrolysis by CysD. In Rhodopseudomonas palustris (strain BisB18), this protein is Sulfate adenylyltransferase subunit 2.